Reading from the N-terminus, the 222-residue chain is Lipid A 4'-phosphatase (222 aa).

Over 1–3 the chain is Cytoplasmic; sequence MAR. A helical membrane pass occupies residues 4 to 24; the sequence is FHIILGLVVCFFAWIFFLIFP. The Periplasmic portion of the chain corresponds to 25–58; that stretch reads NLDIQFAGHFYNSSAHQFIGGYDGFLGFLHWFAR. A helical transmembrane segment spans residues 59–79; it reads FFPIFFSIIVILFLLGSLFID. The Cytoplasmic segment spans residues 80–87; it reads KFKIKYRK. Residues 88–108 traverse the membrane as a helical segment; sequence AIFFIAVCLWIGPGLVVNYVF. At 109-144 the chain is on the periplasmic side; the sequence is KDHWGRPRPVMVEQFNGDKIFQPPFVISSQCDKNCS. A helical membrane pass occupies residues 145–165; sequence FVCGDASMGFWLFAFMPLLAT. The Cytoplasmic portion of the chain corresponds to 166–169; the sequence is RKKK. A helical transmembrane segment spans residues 170 to 190; that stretch reads LVAFIAAVVAGGGLGLMRMSQ. The Periplasmic portion of the chain corresponds to 191 to 193; the sequence is GGH. The chain crosses the membrane as a helical span at residues 194–214; that stretch reads FFSDVVFCGIFVYISTWVVYA. Residues 215 to 222 are Cytoplasmic-facing; sequence LMYRKKEY.

Belongs to the lipid A LpxF 4'-phosphatase family.

It is found in the cell inner membrane. It participates in bacterial outer membrane biogenesis; LPS lipid A biosynthesis. Functionally, removes the 4'-phosphate moiety from lipid IV(A) (a tetraacylated precursor of lipid A) and from pentaacylated lipid A, but not from hexaacylated lipid A (as is found in E.coli). Does not dephosphorylate phosphatidic acid, phosphatidylglycerophosphate, or the 1-phosphate group of lipid A and lipid A precursors. Its expression in E.coli confers resistance to the cationic antimicrobial peptide (CAMP) polymyxin B. Plays a critical role in the ability of the bacteria to avoid the host's innate immune system, especially the bactericidal action of CAMPs, although whether it is CAMP-sensitivity or increased sensitivity to the immune system is not clear. The polypeptide is Lipid A 4'-phosphatase (Francisella tularensis subsp. novicida (strain U112)).